A 127-amino-acid polypeptide reads, in one-letter code: Small ribosomal subunit protein uS13 (127 aa).

A disordered region spans residues 93 to 127 (RRSLPVRGQRTHTNARTRKGPRKGTVANKKKATAK).

Belongs to the universal ribosomal protein uS13 family. In terms of assembly, part of the 30S ribosomal subunit. Forms a loose heterodimer with protein S19. Forms two bridges to the 50S subunit in the 70S ribosome.

Functionally, located at the top of the head of the 30S subunit, it contacts several helices of the 16S rRNA. In the 70S ribosome it contacts the 23S rRNA (bridge B1a) and protein L5 of the 50S subunit (bridge B1b), connecting the 2 subunits; these bridges are implicated in subunit movement. Contacts the tRNAs in the A and P-sites. In Koribacter versatilis (strain Ellin345), this protein is Small ribosomal subunit protein uS13.